Consider the following 481-residue polypeptide: Proline--tRNA ligase (481 aa).

This sequence belongs to the class-II aminoacyl-tRNA synthetase family. ProS type 3 subfamily. As to quaternary structure, homodimer.

The protein localises to the cytoplasm. It catalyses the reaction tRNA(Pro) + L-proline + ATP = L-prolyl-tRNA(Pro) + AMP + diphosphate. Functionally, catalyzes the attachment of proline to tRNA(Pro) in a two-step reaction: proline is first activated by ATP to form Pro-AMP and then transferred to the acceptor end of tRNA(Pro). The protein is Proline--tRNA ligase of Saccharolobus islandicus (strain Y.N.15.51 / Yellowstone #2) (Sulfolobus islandicus).